An 858-amino-acid chain; its full sequence is Potassium channel KOR1 (858 aa).

A disordered region spans residues 1-41; that stretch reads MGRGIGSKRRVEDDDGENMPGRKKKEEEEEEEDDDGEEEYE. At 1-102 the chain is on the cytoplasmic side; sequence MGRGIGSKRR…PDNKWYRLWT (102 aa). Over residues 27–41 the composition is skewed to acidic residues; it reads EEEEEEDDDGEEEYE. Residues 103 to 123 traverse the membrane as a helical segment; sequence RFILVWAVYSSFFTPLEFGFF. At 124–130 the chain is on the extracellular side; the sequence is RGLPRNL. The helical transmembrane segment at 131-151 threads the bilayer; sequence FFLDIAGQIAFLIDIVLRFFV. The Cytoplasmic segment spans residues 152–174; it reads AYRDPDTYRMVHNPTSIALRYCK. The chain crosses the membrane as a helical span at residues 175-195; the sequence is SSFIFDLLGCFPWDAIYKACG. Residues 196 to 201 are Extracellular-facing; the sequence is SKEEVR. The helical; Voltage-sensor transmembrane segment at 202–222 threads the bilayer; sequence YLLWIRLTRAMKVTEFFRSME. The Cytoplasmic segment spans residues 223–236; that stretch reads KDIRINYLFTRIVK. Residues 237 to 257 form a helical membrane-spanning segment; the sequence is LIVVELYCTHTAACIFYYLAT. Over 258–292 the chain is Extracellular; that stretch reads TLPESMEGYTWIGSLQLGDYSYSHFREIDLTKRYM. Positions 293 to 312 form an intramembrane region, pore-forming; sequence TSLYFAIVTMATVGYGDIHA. The Extracellular portion of the chain corresponds to 313–316; the sequence is VNVR. Residues 317 to 337 form a helical membrane-spanning segment; sequence EMIFIMIYVSFDMILGAYLIG. The Cytoplasmic segment spans residues 338 to 858; the sequence is NMTALIVKGS…GDDGGTEARQ (521 aa). 419-539 contributes to the a nucleoside 3',5'-cyclic phosphate binding site; it reads LFKGCSAEFI…RRILSNLSES (121 aa). ANK repeat units lie at residues 559–592, 596–625, 629–658, 660–689, 693–722, and 726–756; these read KQEAELTLRVNNAAFYGDMHQLKSLIRAGADPKN, DGRSPLHLAACKGFEDVVQFLLHEGVDIDL, FGNTPLLEAVKQGHDRVATLLFSKGAKLSL, NAGSHLCTAVARGDTDFVRRALAYGGDPNA, DHRAPLHIAAAEGLYLMAKLLVDAGASVFA, and WGTTPLDEGRRCGSRTMVQLLEAAKSGELSR. The KHA domain occupies 772-858; it reads RCSVFPHHPW…GDDGGTEARQ (87 aa).

Belongs to the potassium channel family. Plant (TC 1.A.1.4) subfamily.

The protein localises to the membrane. Functionally, probable outward-rectifying potassium channel. The sequence is that of Potassium channel KOR1 from Oryza sativa subsp. japonica (Rice).